We begin with the raw amino-acid sequence, 496 residues long: Germacrene A hydroxylase (496 aa).

Topologically, residues 1–2 (ME) are cytoplasmic. A helical; Signal-anchor for type II membrane protein transmembrane segment spans residues 3-23 (LTLTTSLGLAVFVFILFKLLT). Residues 24 to 496 (GSKSTKNSLP…TAYKTANNSA (473 aa)) are Lumenal-facing. Residue cysteine 432 coordinates heme. N-linked (GlcNAc...) asparagine glycosylation is present at asparagine 493.

This sequence belongs to the cytochrome P450 family. Requires heme as cofactor.

The protein resides in the endoplasmic reticulum membrane. It catalyses the reaction (+)-(R)-germacrene A + 3 reduced [NADPH--hemoprotein reductase] + 3 O2 = germacra-1(10),4,11(13)-trien-12-oate + 3 oxidized [NADPH--hemoprotein reductase] + 4 H2O + 4 H(+). It functions in the pathway secondary metabolite biosynthesis; terpenoid biosynthesis. Involved in the biosynthesis of germacrene-derived sesquiterpene lactones. Catalyzes three consecutive oxidations of germacrene A to produce germacrene A acid. Could also catalyze the three-step oxidation of non-natural substrate amorphadiene to artemisinic acid. In Barnadesia spinosa (Spiny barnadesia), this protein is Germacrene A hydroxylase.